We begin with the raw amino-acid sequence, 176 residues long: MYHLPDTLYEQEKMPRRAKRLFVDTFSQHHKLNAGDEEAAMQKARQALEERYVRVNDLQWIPRRAAYEIIRDDMSSDSDGPAASPPGDHARPNRDKRRVSYSSSDSSARSSDDQLISARGSDDQLISTRSSDDHLVGAGKARRPARKKKRIGKVVASQKFVGGGAQYSTDDDEDDY.

A disordered region spans residues 71–176 (RDDMSSDSDG…YSTDDDEDDY (106 aa)). Composition is skewed to low complexity over residues 77 to 87 (DSDGPAASPPG) and 100 to 109 (SYSSSDSSAR). A compositionally biased stretch (basic residues) spans 140–152 (KARRPARKKKRIG).

This is an uncharacterized protein from Orgyia pseudotsugata multicapsid polyhedrosis virus (OpMNPV).